Consider the following 319-residue polypeptide: Cobalamin biosynthesis protein CobD (319 aa).

4 helical membrane-spanning segments follow: residues 56 to 76, 153 to 173, 204 to 224, and 290 to 310; these read GLWIVVVGLTWLVSWGCLWLM, VDGVIAPLFFLMIGGAPLAMA, LANWLPARLSWLLLSAAAWFI, and IPLSIYLMMIASQLALLLFAL.

It belongs to the CobD/CbiB family.

The protein localises to the cell membrane. The protein operates within cofactor biosynthesis; adenosylcobalamin biosynthesis. Converts cobyric acid to cobinamide by the addition of aminopropanol on the F carboxylic group. The protein is Cobalamin biosynthesis protein CobD of Photorhabdus laumondii subsp. laumondii (strain DSM 15139 / CIP 105565 / TT01) (Photorhabdus luminescens subsp. laumondii).